Reading from the N-terminus, the 451-residue chain is Ribosomal protein uS12 methylthiotransferase RimO (451 aa).

The region spanning 17-127 is the MTTase N-terminal domain; it reads PTIGFVSLGC…VLAQVHEHLP (111 aa). [4Fe-4S] cluster is bound by residues Cys-26, Cys-62, Cys-91, Cys-160, Cys-164, and Cys-167. One can recognise a Radical SAM core domain in the interval 146-383; that stretch reads LTPRHYAYLK…MQLQQRISTE (238 aa). A TRAM domain is found at 386–451; it reads KQKVGQTLPV…DEYDLWGTRV (66 aa).

Belongs to the methylthiotransferase family. RimO subfamily. It depends on [4Fe-4S] cluster as a cofactor.

It is found in the cytoplasm. It carries out the reaction L-aspartate(89)-[ribosomal protein uS12]-hydrogen + (sulfur carrier)-SH + AH2 + 2 S-adenosyl-L-methionine = 3-methylsulfanyl-L-aspartate(89)-[ribosomal protein uS12]-hydrogen + (sulfur carrier)-H + 5'-deoxyadenosine + L-methionine + A + S-adenosyl-L-homocysteine + 2 H(+). Its function is as follows. Catalyzes the methylthiolation of an aspartic acid residue of ribosomal protein uS12. The sequence is that of Ribosomal protein uS12 methylthiotransferase RimO from Cellvibrio japonicus (strain Ueda107) (Pseudomonas fluorescens subsp. cellulosa).